The sequence spans 163 residues: Beta-lactoglobulin-2 (163 aa).

2 cysteine pairs are disulfide-bonded: cysteine 66–cysteine 161 and cysteine 106–cysteine 120.

This sequence belongs to the calycin superfamily. Lipocalin family. As to quaternary structure, monomer.

It localises to the secreted. Its function is as follows. Lactoglobulin is the primary component of whey, it binds retinol and is probably involved in the transport of that molecule. This Felis catus (Cat) protein is Beta-lactoglobulin-2 (LGB2).